A 93-amino-acid polypeptide reads, in one-letter code: YcgL domain-containing protein Swoo_2115 (93 aa).

One can recognise a YcgL domain in the interval 1-85; that stretch reads MICAVYKSRR…PVVNLLEEHK (85 aa).

This chain is YcgL domain-containing protein Swoo_2115, found in Shewanella woodyi (strain ATCC 51908 / MS32).